Consider the following 235-residue polypeptide: Kinetochore protein Spc25 (235 aa).

Residues 44 to 106 are a coiled coil; the sequence is KNILSAKEAI…DMEAQLLRHT (63 aa). The interval 193 to 216 is disordered; that stretch reads EVAGASPVTPSGSERPKATSKHSN.

Belongs to the SPC25 family. In terms of assembly, component of the Ndc80 complex, which is composed of Ndc80, Nuf2 and Spc25.

Its subcellular location is the nucleus. It is found in the chromosome. It localises to the centromere. The protein resides in the kinetochore. Acts as a component of the essential kinetochore-associated Ndc80 complex, which is required for chromosome segregation and spindle checkpoint activity during meiosis and mitosis. Required for kinetochore integrity and the organization of stable microtubule binding sites in the outer plate of the kinetochore. Participates in SAC signaling that responds specifically to disruptions in spindle microtubule dynamics. The NDC80 complex synergistically enhances the affinity of the SKA1 complex for microtubules and may allow the NDC80 complex to track depolymerizing microtubules. The polypeptide is Kinetochore protein Spc25 (Drosophila pseudoobscura pseudoobscura (Fruit fly)).